The primary structure comprises 148 residues: UPF0178 protein EF_0842 (148 aa).

Belongs to the UPF0178 family.

In Enterococcus faecalis (strain ATCC 700802 / V583), this protein is UPF0178 protein EF_0842.